The sequence spans 495 residues: Bile acid-sensitive ion channel (495 aa).

The interval 1–30 is binds the plasma membrane and stabilizes the channel in the closed state; it reads MEHTEKSKGPAEKGLLGKIRRYLSKRPLPS. Residues 1 to 61 are Cytoplasmic-facing; the sequence is MEHTEKSKGP…NIAQNQNKVR (61 aa). The chain crosses the membrane as a helical span at residues 62 to 82; the sequence is KVIWLSVVLGSVSLLVWQIYS. Residues 83–459 lie on the Extracellular side of the membrane; that stretch reads RLVNYFMWPT…GLFCGASLIT (377 aa). 6 cysteine pairs are disulfide-bonded: Cys112–Cys207, Cys185–Cys192, Cys298–Cys377, Cys315–Cys373, Cys328–Cys350, and Cys330–Cys342. N-linked (GlcNAc...) asparagine glycans are attached at residues Asn147 and Asn163. Asn306 carries an N-linked (GlcNAc...) asparagine glycan. N-linked (GlcNAc...) asparagine glycans are attached at residues Asn370, Asn405, and Asn421. Positions 454-456 match the GAS motif; ion selectivity filter motif; the sequence is GAS. The chain crosses the membrane as a helical span at residues 460 to 480; it reads IIEIIEYLFTSFYWVFIFFLL. At 481-495 the chain is on the cytoplasmic side; that stretch reads KILEMIQRTSPPQTV.

The protein belongs to the amiloride-sensitive sodium channel (TC 1.A.6) family. ASIC5 subfamily. In terms of assembly, forms homotrimeric channels. Expressed by cholangiocytes (at protein level). Detected in brain, liver, duodenum, jejunum, ileum and testis.

It localises to the apical cell membrane. Its subcellular location is the cell membrane. The enzyme catalyses Na(+)(in) = Na(+)(out). It carries out the reaction Li(+)(in) = Li(+)(out). The catalysed reaction is K(+)(in) = K(+)(out). It catalyses the reaction H(+)(in) = H(+)(out). Inhibited by the diuretic drug amiloride. Inhibited by diminazene. Inhibited by extracellular Ca(2+). Forms bile acid-gated sodium channels and may play a role in bile acid-dependent absorption and secretion by epithelial cells of the bile ducts. Displays high selectivity for sodium ions but can also permit the permeation of other cations. The gating could be indirect and the consequence of alterations of the membrane environment of the channel by bile acids. As a sodium channel of type II unipolar brush cells of the vestibulocerebellum, controlling the electrical activity of these cells, could play a role in motor coordination and balance. The polypeptide is Bile acid-sensitive ion channel (Rattus norvegicus (Rat)).